The following is an 800-amino-acid chain: Phenylalanine--tRNA ligase beta subunit (800 aa).

Residues 39–152 enclose the tRNA-binding domain; it reads AAGLSKIVVG…EDAVPGEEVF (114 aa). In terms of domain architecture, B5 spans 405–480; the sequence is TSDVEVSSTL…RIYGYDRLPT (76 aa). Mg(2+) contacts are provided by aspartate 458, aspartate 464, glutamate 467, and glutamate 468. Positions 707 to 800 constitute an FDX-ACB domain; it reads TKFPAVSRDV…LEEKVNAEVR (94 aa).

It belongs to the phenylalanyl-tRNA synthetase beta subunit family. Type 1 subfamily. In terms of assembly, tetramer of two alpha and two beta subunits. Mg(2+) serves as cofactor.

It is found in the cytoplasm. The enzyme catalyses tRNA(Phe) + L-phenylalanine + ATP = L-phenylalanyl-tRNA(Phe) + AMP + diphosphate + H(+). This Streptococcus pneumoniae (strain ATCC BAA-255 / R6) protein is Phenylalanine--tRNA ligase beta subunit.